Reading from the N-terminus, the 101-residue chain is MIPGEIITAAGEIELNAGLETVTIEVANSGDRPVQVGSHYHFAEANPGLLFDRDAARGKRLDIPAGTAVRFEPGQTRQVTLIPLSGKREVFGFRQQVMGKL.

This sequence belongs to the urease beta subunit family. As to quaternary structure, heterotrimer of UreA (gamma), UreB (beta) and UreC (alpha) subunits. Three heterotrimers associate to form the active enzyme.

Its subcellular location is the cytoplasm. It catalyses the reaction urea + 2 H2O + H(+) = hydrogencarbonate + 2 NH4(+). It participates in nitrogen metabolism; urea degradation; CO(2) and NH(3) from urea (urease route): step 1/1. This Sinorhizobium medicae (strain WSM419) (Ensifer medicae) protein is Urease subunit beta.